The sequence spans 363 residues: G-protein coupled receptor 6 (363 aa).

The Extracellular portion of the chain corresponds to 1–75; it reads MNASAAALNE…SGLLLSAVNP (75 aa). N-linked (GlcNAc...) asparagine glycans are attached at residues Asn2 and Asn9. Residues 29–48 are disordered; sequence GAPDTGEWGPPAASAALGGG. Asn52 carries N-linked (GlcNAc...) asparagine glycosylation. The chain crosses the membrane as a helical span at residues 76–95; it reads WDVLLCVSGTVIAGENALVV. The Cytoplasmic segment spans residues 96 to 107; that stretch reads ALIASTPALRTP. A helical membrane pass occupies residues 108–131; the sequence is MFVLVGSLATADLLAGCGLILHFV. Residues 132–143 lie on the Extracellular side of the membrane; sequence FQYVVPSETVSL. A helical transmembrane segment spans residues 144-165; it reads LMVGFLVASFAASVSSLLAITV. Residues 166 to 186 are Cytoplasmic-facing; the sequence is DRYLSLYNALTYYSRRTLLGV. A helical transmembrane segment spans residues 187 to 206; the sequence is HLLLAATWTVSLGLGLLPVL. Residues 207–231 are Extracellular-facing; the sequence is GWNCLADRTSCSVVRPLTRSHVALL. A helical membrane pass occupies residues 232 to 250; the sequence is STSFFVVFGIMLHLYVRIC. At 251–278 the chain is on the cytoplasmic side; sequence QVVWRHAHQIALQQHCLAPPHLAATRKG. The helical transmembrane segment at 279-305 threads the bilayer; it reads VGTLAVVLGTFGASWLPFAIYCVVGSQ. The Extracellular portion of the chain corresponds to 306–310; the sequence is EDPAI. Residues 311–332 traverse the membrane as a helical segment; that stretch reads YTYATLLPATYNSMINPIIYAF. Residues 333–363 lie on the Cytoplasmic side of the membrane; sequence RNQEIQRALWLLFCGCFQSKVPFRSRSPSEV. Cys346 carries the S-palmitoyl cysteine lipid modification. Phosphoserine is present on residues Ser357, Ser359, and Ser361.

It belongs to the G-protein coupled receptor 1 family. In terms of tissue distribution, mainly expressed in the brain. Selectively expressed in striatopallidal neurons in the striatum.

It is found in the cell membrane. Its function is as follows. Orphan receptor with constitutive G(s) signaling activity that activate cyclic AMP. Promotes neurite outgrowth and blocks myelin inhibition in neurons. The polypeptide is G-protein coupled receptor 6 (Gpr6) (Mus musculus (Mouse)).